Here is a 314-residue protein sequence, read N- to C-terminus: Methionyl-tRNA formyltransferase (314 aa).

Residue 113–116 (SLLP) coordinates (6S)-5,6,7,8-tetrahydrofolate.

The protein belongs to the Fmt family.

It catalyses the reaction L-methionyl-tRNA(fMet) + (6R)-10-formyltetrahydrofolate = N-formyl-L-methionyl-tRNA(fMet) + (6S)-5,6,7,8-tetrahydrofolate + H(+). Attaches a formyl group to the free amino group of methionyl-tRNA(fMet). The formyl group appears to play a dual role in the initiator identity of N-formylmethionyl-tRNA by promoting its recognition by IF2 and preventing the misappropriation of this tRNA by the elongation apparatus. The protein is Methionyl-tRNA formyltransferase of Pseudomonas syringae pv. tomato (strain ATCC BAA-871 / DC3000).